Reading from the N-terminus, the 644-residue chain is MLEEKFLDLLAQKYDSEEKVVTEIINLEAILDLPKGTEHFVSDLHGEYQAFQHVLRNGSGKVKEKIRDIFKHELSEKEINEFATLIYYPEEKLQLIRNQFDNKQELNAWYTKTIDQMIRLIPYASSKYTRTKLRKALPKQFVYIIEELLYKTDEYTNKKHYYSKIVQKVISLGQADKLIIGLAYTTQQLVVDHLHVVGDIYDRGPEPDKIMEALINYHSLDIQWGNHDVLWIGAFSGSKVCLANILRICARYDNLDIIEDVYGINLRPLLNLAEKYYKDNPAFRPKRHSNKKLSDQEQSQITKIHQAIAMIQFKLEMPIIKRRPYFNMSKRLLLEKVDYENNKITIDGKTYPLENTCFATVNPDQPDELLEEEKQVMDKLLFSVQHSEKLARHMEFLMKKGTLYLRYNGNLLIHGCIPIDENGNMEKMFIENKTYAGRELLDIFENYLLHAFSNREATDDLATDMVWYLWTGEYSSLFGKREMTTFERYFIKDKALHKERKNPYYYLREKEGICRMILEEFDLDPDQGHIINGHTPVKEIEGENPIKANGKMIVIDGGFSKAYQPTTGIAGYTLLYNSFGMQLVAHQHFNSKEDVLQNGNDVLSVKRLVDEELERKKISETNIGEKLIEDINMLNSLLKYRYLK.

This sequence belongs to the FBPase class 3 family. The cofactor is Mn(2+).

It carries out the reaction beta-D-fructose 1,6-bisphosphate + H2O = beta-D-fructose 6-phosphate + phosphate. The protein operates within carbohydrate biosynthesis; gluconeogenesis. The polypeptide is Fructose-1,6-bisphosphatase class 3 (Oceanobacillus iheyensis (strain DSM 14371 / CIP 107618 / JCM 11309 / KCTC 3954 / HTE831)).